Consider the following 447-residue polypeptide: Phosphoglucosamine mutase (447 aa).

Catalysis depends on Ser-104, which acts as the Phosphoserine intermediate. Mg(2+)-binding residues include Ser-104, Asp-243, Asp-245, and Asp-247. Ser-104 is modified (phosphoserine).

This sequence belongs to the phosphohexose mutase family. Requires Mg(2+) as cofactor. In terms of processing, activated by phosphorylation.

It carries out the reaction alpha-D-glucosamine 1-phosphate = D-glucosamine 6-phosphate. In terms of biological role, catalyzes the conversion of glucosamine-6-phosphate to glucosamine-1-phosphate. In Corynebacterium aurimucosum (strain ATCC 700975 / DSM 44827 / CIP 107346 / CN-1) (Corynebacterium nigricans), this protein is Phosphoglucosamine mutase.